The sequence spans 168 residues: Photosystem I assembly protein Ycf3 (168 aa).

TPR repeat units follow at residues Ala-35–Pro-68, Ser-72–Leu-105, and Gly-120–Asn-153.

Belongs to the Ycf3 family.

Its subcellular location is the plastid membrane. Its function is as follows. Essential for the assembly of the photosystem I (PSI) complex. May act as a chaperone-like factor to guide the assembly of the PSI subunits. This Cuscuta obtusiflora (Peruvian dodder) protein is Photosystem I assembly protein Ycf3.